A 277-amino-acid polypeptide reads, in one-letter code: Leucine-rich repeat-containing protein 10 (277 aa).

LRR repeat units follow at residues 53–74 (ELVKLYLSDNHLNSLPPELGQL), 76–97 (NLQILALDFNNFKALPQVVCTL), 99–120 (QLCILYLGNNKLCDLPSELSLL), 122–143 (NLRTLWIEANCLTQLPDVVCEL), 145–167 (LLKTLHAGSNALRLLPGQLRRLQ), 168–189 (ELRTIWLSGNRLTDFPTVLLHM), and 191–212 (FLEVIDVDWNSIRYFPSLAHLS).

The protein localises to the nucleus. Its function is as follows. May play important roles in cardiac development and/or cardiac function. The protein is Leucine-rich repeat-containing protein 10 (LRRC10) of Homo sapiens (Human).